The chain runs to 91 residues: Elongation factor 1-beta (91 aa).

Belongs to the EF-1-beta/EF-1-delta family.

Functionally, promotes the exchange of GDP for GTP in EF-1-alpha/GDP, thus allowing the regeneration of EF-1-alpha/GTP that could then be used to form the ternary complex EF-1-alpha/GTP/AAtRNA. This chain is Elongation factor 1-beta (ef1b), found in Pyrococcus abyssi (strain GE5 / Orsay).